Consider the following 426-residue polypeptide: 3-phosphoshikimate 1-carboxyvinyltransferase (426 aa).

The 3-phosphoshikimate site is built by K22, S23, and R27. K22 serves as a coordination point for phosphoenolpyruvate. Positions 96 and 124 each coordinate phosphoenolpyruvate. 3-phosphoshikimate contacts are provided by S170, S171, Q172, S198, D314, N337, and K341. Q172 serves as a coordination point for phosphoenolpyruvate. Catalysis depends on D314, which acts as the Proton acceptor. Positions 345, 387, and 412 each coordinate phosphoenolpyruvate.

Belongs to the EPSP synthase family. As to quaternary structure, monomer.

Its subcellular location is the cytoplasm. The catalysed reaction is 3-phosphoshikimate + phosphoenolpyruvate = 5-O-(1-carboxyvinyl)-3-phosphoshikimate + phosphate. It participates in metabolic intermediate biosynthesis; chorismate biosynthesis; chorismate from D-erythrose 4-phosphate and phosphoenolpyruvate: step 6/7. Catalyzes the transfer of the enolpyruvyl moiety of phosphoenolpyruvate (PEP) to the 5-hydroxyl of shikimate-3-phosphate (S3P) to produce enolpyruvyl shikimate-3-phosphate and inorganic phosphate. This is 3-phosphoshikimate 1-carboxyvinyltransferase from Shewanella baltica (strain OS155 / ATCC BAA-1091).